The primary structure comprises 447 residues: MNAWEVNFDGLVGLTHHYAGLSFGNEASTRHRFQVSNPRQAAKQGLLKMKALADAGFPQAVIPPHERPFIPVLRQLGFSGSDEQVLEKVARQAPHWLSSVSSASPMWVANAATIAPSADTLDGKVHLTVANLNNKFHRSLEAHVTESLLKAIFNDEEKFSVHSALPQVALLGDEGAANHNRLGGHYGEPGMQLFVYGREEGNDTRPSRYPARQTREASEAVARLNQVNPQQVIFAQQNPDVIDQGVFHNDVIAVSNRQVLFCHQQAFARQSQLLANLRARVNGFMAIEVPATQVSVSDAVSTYLFNSQLLSRDDGSMMLVLPQECREHAGVWGYLNELLAADNPISELKVFDLRESMANGGGPACLRLRVVLTEEERRAVNPAVMMNDTLFNALNDWVDRYYRDRLTAADLADPQLLREGREALDVLSQLLNLGSVYPFQREGGGNG.

Substrate is bound by residues 19–28 (AGLSFGNEAS), N110, and 137–138 (HR). E174 is a catalytic residue. R212 contributes to the substrate binding site. H248 is a catalytic residue. Residues D250 and N359 each coordinate substrate. The active-site Nucleophile is the C365.

The protein belongs to the succinylarginine dihydrolase family. Homodimer.

It catalyses the reaction N(2)-succinyl-L-arginine + 2 H2O + 2 H(+) = N(2)-succinyl-L-ornithine + 2 NH4(+) + CO2. It participates in amino-acid degradation; L-arginine degradation via AST pathway; L-glutamate and succinate from L-arginine: step 2/5. In terms of biological role, catalyzes the hydrolysis of N(2)-succinylarginine into N(2)-succinylornithine, ammonia and CO(2). The protein is N-succinylarginine dihydrolase of Escherichia coli O8 (strain IAI1).